The primary structure comprises 753 residues: Transcription factor SOX-30 (753 aa).

Disordered stretches follow at residues 1-45 (MERA…TLSA) and 137-161 (AKKQKLGPSLDQSVGPRGAVETGPR). Residues 7-23 (EPPPQPRPLRPAPPPLP) are compositionally biased toward pro residues. A DNA-binding region (HMG box) is located at residues 337 to 405 (VKRPMNAFMV…KHREEFPGWV (69 aa)). 2 disordered regions span residues 514–575 (TGPS…SPCP) and 726–753 (PTSTPSSIQQVNVTDSDEEEEEKVLRDL). 2 stretches are compositionally biased toward polar residues: residues 531–563 (TVKQPTPVSLESANRISSSASTAHARFATSTIQ) and 726–739 (PTSTPSSIQQVNVT).

Interacts with CTNNB1, competitively inhibiting CTNNB1-TCF7L2/TCF4 interaction.

The protein resides in the nucleus. It is found in the cytoplasm. Functionally, acts both as a transcriptional activator and a repressor. Binds to the DNA sequence 5'-ACAAT-3' and shows a preference for guanine residues surrounding this core motif. Binds to its own promoter and activates its own transcription. Required to activate the expression of postmeiotic genes involved in spermiogenesis. Binds to the promoter region of CTNNB1 and represses its transcription which leads to inhibition of Wnt signaling. Also inhibits Wnt signaling by binding to the CTNNB1 protein, preventing interaction of CTNNB1 with TCF7L2/TCF4. This Homo sapiens (Human) protein is Transcription factor SOX-30 (SOX30).